We begin with the raw amino-acid sequence, 142 residues long: Pleckstrin homology-like domain family A member 2 (142 aa).

At Ser3 the chain carries Phosphoserine. Residues 7–99 form the PH domain; sequence VLREGELEKR…WNASITLALI (93 aa).

This sequence belongs to the PHLDA2 family.

Its subcellular location is the cytoplasm. The protein localises to the membrane. Functionally, plays a role in regulating placenta growth. May act via its PH domain that competes with other PH domain-containing proteins, thereby preventing their binding to membrane lipids. This Bos taurus (Bovine) protein is Pleckstrin homology-like domain family A member 2 (PHLDA2).